A 537-amino-acid polypeptide reads, in one-letter code: Prolyl 4-hydroxylase subunit alpha-2 (537 aa).

The first 23 residues, 1-23 (MKLQVLVLVLLMSWFGVLSWVQA), serve as a signal peptide directing secretion. An N-linked (GlcNAc...) asparagine glycan is attached at Asn-117. One copy of the TPR repeat lies at 209 to 242 (SLVLDYLSYAVFQLGDLHRAVELTRRLLSLDPSH). Residue Asn-266 is glycosylated (N-linked (GlcNAc...) asparagine). One can recognise a Fe2OG dioxygenase domain in the interval 414-522 (TAELLQVANY…KWVSNKWFHE (109 aa)). Fe cation contacts are provided by His-432 and Asp-434. The residue at position 482 (Lys-482) is an N6-succinyllysine. His-503 contacts Fe cation. Lys-513 lines the 2-oxoglutarate pocket.

This sequence belongs to the P4HA family. Heterotetramer of two alpha-2 chains and two beta chains (P4HB) (the beta chain is the multi-functional PDI), where P4HB plays the role of a structural subunit; this tetramer catalyzes the formation of 4-hydroxyproline in collagen. Fe(2+) serves as cofactor. The cofactor is L-ascorbate. In terms of tissue distribution, expressed at least in brain, heart and lung.

The protein localises to the endoplasmic reticulum lumen. The enzyme catalyses L-prolyl-[collagen] + 2-oxoglutarate + O2 = trans-4-hydroxy-L-prolyl-[collagen] + succinate + CO2. With respect to regulation, inhibited by poly(L-proline) only at very high concentrations. In terms of biological role, catalyzes the post-translational formation of 4-hydroxyproline in -Xaa-Pro-Gly- sequences in collagens and other proteins. The protein is Prolyl 4-hydroxylase subunit alpha-2 (P4ha2) of Mus musculus (Mouse).